The sequence spans 434 residues: Urokinase-type plasminogen activator (434 aa).

Residues M1–S20 form the signal peptide. The 37-residue stretch at Q36–E72 folds into the EGF-like domain. Intrachain disulfides connect C40-C48, C42-C60, C62-C71, C79-C158, C96-C139, C128-C152, C162-C296, C202-C218, C210-C285, C310-C379, C342-C358, and C369-C397. One can recognise a Kringle domain in the interval C79–C158. A connecting peptide region spans residues E159–K172. The region spanning I173–N421 is the Peptidase S1 domain. The active-site Charge relay system is the H217. The N-linked (GlcNAc...) asparagine glycan is linked to N228. Residue D272 is the Charge relay system of the active site. S373 serves as the catalytic Charge relay system.

It belongs to the peptidase S1 family.

It is found in the secreted. It carries out the reaction Specific cleavage of Arg-|-Val bond in plasminogen to form plasmin.. Functionally, specifically cleaves the zymogen plasminogen to form the active enzyme plasmin. This Gallus gallus (Chicken) protein is Urokinase-type plasminogen activator (PLAU).